A 720-amino-acid polypeptide reads, in one-letter code: Calcium/calmodulin-dependent protein kinase type II (720 aa).

The 258-residue stretch at 12–269 (YDVKEELGKG…ADQALKVPWI (258 aa)) folds into the Protein kinase domain. ATP contacts are provided by residues 18–26 (LGKGAFSVV) and lysine 41. The active-site Proton acceptor is the aspartate 134. Threonine 284 is subject to Phosphothreonine; by autocatalysis. Disordered regions lie at residues 317 to 345 (SDST…QPTS) and 504 to 586 (DNLS…NLSA). Polar residues-rich tracts occupy residues 504–514 (DNLSASTSSDL) and 526–540 (PPST…SQTI). Over residues 569 to 586 (SSSNSSTASKSSSTNLSA) the composition is skewed to low complexity.

Belongs to the protein kinase superfamily. CAMK Ser/Thr protein kinase family. CaMK subfamily. Dodecamer. Subunits are tightly packed around a central ring-shaped scaffold with extensive contacts between the regulatory segment of one kinase and the catalytic domain of another enabling cooperative activation of a subunit by the adjacent molecule. Interacts with and phosphorylates daf-16; the interaction promotes daf-16 nuclear localization. Interacts with egl-2 and tir-1. Interacts with nsy-1. The cofactor is Mg(2+). In terms of tissue distribution, expressed in the nervous system. Observed in the ADF and AWC neurons. Position in AWC neurons is regulated by microtubules. Localized to clusters in ventral cord neurites which appear to be required for glr-1 trafficking. Also present in oocytes.

It localises to the cytoplasm. It is found in the cell projection. The protein localises to the axon. The protein resides in the perikaryon. It carries out the reaction L-seryl-[protein] + ATP = O-phospho-L-seryl-[protein] + ADP + H(+). The catalysed reaction is L-threonyl-[protein] + ATP = O-phospho-L-threonyl-[protein] + ADP + H(+). Its activity is regulated as follows. Ca2(+)/calmodulin binding removes an autoinhibitory regulatory segment located C-terminal to the kinase domain. This releases the catalytic activity of the enzyme and makes accessible a regulatory residue Thr-284. Phosphorylation of Thr-284 by another kinase domain within the oligomeric holoenzyme keeps CaMKII active in the absence of Ca(2+)/calmodulin by preventing the rebinding of the regulatory segment to the kinase domain and by increasing the affinity of calmodulin for the enzyme. Can respond to high-frequency Ca(2+) pulses to become Ca(2+) independent. Acts in the signaling of a variety of pathways and processes. Phosphorylates 'Ser-319' of daf-16 in response to stress signals, such as heat, starvation and oxidation, which plays a role in prolonging lifespan. Required for viability under chronic osmotic stress in which it acts downstream of osr-1. Has roles in locomotion, oocyte maturation, brood size, egg laying, defecation, meiotic maturation and neuronal cell fate specification. Required for the regulation of synaptic density and neuromuscular junction morphology. Regulates the synaptic trafficking of glr-1. Bidirectional modulator of neurotransmitter release with negative modulatory effects mainly mediated via slo-1 activation. Involved in activation of ADF neurons and increased tph-1 transcription following exposure to pathogenic bacteria which leads to learned olfactory aversion to the bacteria. Implicated in the muscle regulation of spicule protraction. In conjunction with egl-2 has a role in the suppression of mating behavior under food deprivation to encourage foraging. Involved in restricting str-2 expression to only one of the two AWC neurons. May suppress the functional response to an internal pacemaker, perhaps by modulating the activity of the IP3 receptor. The protein is Calcium/calmodulin-dependent protein kinase type II (unc-43) of Caenorhabditis elegans.